The following is a 1156-amino-acid chain: MTEVEQPPQNGIDPTAGEDDDNSKARPADIEQDMREMERRKRVEAIMGSKLFREELERIVDSARDGGAGASGILQQLSDIVGVPVSRVGSVFKSSNCMVPINDIRGVESMGYAKGEKILRCKLAATFRLLDLYGWTQGLGAQITARLKVDQEYFLVNPYGLLYHEITASALNKVDMQGQIVEQGTTNFGGNKSHFVLHSVVHAARPDIRCAIYIGCSPVVAISSLKTGLLPLTKDACVLGEITTHAYTGLFDEEERNRLVRSLGPNSKVILLTNHGALCCGETIEEAFFAACHIVQACETQLKLLPVGLDNLVLIPEESRKAIYEQSRRPPEDLEKKFAAVAAAEDGAATAEKDAAEAVPKVGSPPKWRVGGAEFEALMRMLDNAGYRTGYIYRHPLIKSDPPKPKNDVELPPAVSSLGYLLEEEELFRQGIWKKGDIRKGGDRSRWLNSPNVYQKVEVLETGTPDPKKITKWVAEGSPTHSTPVRIEDPLQFVPAGTNPREFKRVQQLIKDNRRADKISAGPQSHILEGVTWDEASRLKDATVSQAGDHVVMMGAASKGIIQRGFQHNATVYKAPYAKNPFDNVTDDELNEYKRTVERKKKSVHGEYTDTDFSESEAVLQAGTKKYPQSEPETEHQVIEIQTQQAPVPRQAEVVLSDALVSQLAQKYAFLYSPGQYMYACMKMAPLMHKVYVIHKVEPVSKHNYPPVNDGNMSIHHNESGAGFMAQESSVISSTPVRNALASVSLPEERNHSILGLSSTPYRTISHFGFNCPLITSPTILLHPEHRSIWQRVAEQREKVVSFIDLTTLSLDNRKLLNVVTSTHPTQCQSQSQSFISEKHIQLEVTPPKRKQRVYSATISSGLDDSLDELDSLMSGLAINMPRSREQDSGLYRSYTFLPSNHALPKDTDANNRDQTDRERPEAEQEESFHCAGDSGIGDSTGRRPRLATTSNDSSIQEAEAYTQGKHVKLTLSSSPTPTATQSPATIEILINVSLRNAECVQTVQTHEQEFRAKLERVIDEEIHYISQQLAFKQRQAELHEQQTTSRAPIATPSFTTMHPPAPASSSSMVHRSNSAPELCHTYSYVAVGDLSTKQDQASPQLPAEGEPLNDILSSLEKELERLLNSVVTAHMLHNKAIIHECRARFSQLADGIVSS.

Residues 1–36 (MTEVEQPPQNGIDPTAGEDDDNSKARPADIEQDMRE) are disordered. Over residues 22 to 36 (NSKARPADIEQDMRE) the composition is skewed to basic and acidic residues. Phosphoserine is present on Ser478. Residues Thr480 and Thr498 each carry the phosphothreonine modification. At Ser603 the chain carries Phosphoserine. Tyr608 carries the phosphotyrosine modification. Residues Thr609 and Thr611 each carry the phosphothreonine modification. Residue Ser614 is modified to Phosphoserine. Tyr627 is subject to Phosphotyrosine. A Phosphoserine modification is found at Ser630. The disordered stretch occupies residues 897–956 (FLPSNHALPKDTDANNRDQTDRERPEAEQEESFHCAGDSGIGDSTGRRPRLATTSNDSSI). Positions 904–929 (LPKDTDANNRDQTDRERPEAEQEESF) are enriched in basic and acidic residues.

Belongs to the aldolase class II family. Adducin subfamily. In terms of tissue distribution, isoform C is expressed in nurse cells. Isoform A is produced in the nurse cell but transported into the oocyte at stage 1, localizes to the oocyte cortex at stage 8 and to the anterior pole from day 9 onwards. Isoform B is expressed in the somatic follicle cells that surround the germline.

It is found in the cytoplasm. The protein resides in the cytoskeleton. The protein localises to the cell membrane. Required for assembling actin at ring canals in developing egg chambers. Probably interacts with other developmental proteins involved in nurse cell/oocyte transport through the ring canals. Important for normal neuromotor function. This chain is Protein hu-li tai shao (hts), found in Drosophila melanogaster (Fruit fly).